The following is a 548-amino-acid chain: Chaperonin GroEL (548 aa).

Residues 30–33 (TLGP), K51, 87–91 (DGTTT), G415, 479–481 (NAA), and D495 each bind ATP.

Belongs to the chaperonin (HSP60) family. Forms a cylinder of 14 subunits composed of two heptameric rings stacked back-to-back. Interacts with the co-chaperonin GroES.

The protein localises to the cytoplasm. The catalysed reaction is ATP + H2O + a folded polypeptide = ADP + phosphate + an unfolded polypeptide.. Functionally, together with its co-chaperonin GroES, plays an essential role in assisting protein folding. The GroEL-GroES system forms a nano-cage that allows encapsulation of the non-native substrate proteins and provides a physical environment optimized to promote and accelerate protein folding. The chain is Chaperonin GroEL from Klebsiella aerogenes (strain ATCC 13048 / DSM 30053 / CCUG 1429 / JCM 1235 / KCTC 2190 / NBRC 13534 / NCIMB 10102 / NCTC 10006 / CDC 819-56) (Enterobacter aerogenes).